A 259-amino-acid chain; its full sequence is Protein odd-skipped-related 1 (259 aa).

3 consecutive C2H2-type zinc fingers follow at residues 168–190 (FVCK…ERTH), 196–218 (YTCD…RYIH), and 224–246 (FKCQ…KTLH).

It belongs to the Odd C2H2-type zinc-finger protein family.

The protein localises to the nucleus. In terms of biological role, transcriptional repressor. Required for pronephric kidney development. This Xenopus tropicalis (Western clawed frog) protein is Protein odd-skipped-related 1.